Reading from the N-terminus, the 176-residue chain is Ribosome rescue factor SmrB (176 aa).

A Smr domain is found at 93 to 168; that stretch reads LDLHGYRQSE…GDAALLVLID (76 aa).

The protein belongs to the SmrB family. Associates with collided ribosomes, but not with correctly translating polysomes.

Functionally, acts as a ribosome collision sensor. Detects stalled/collided disomes (pairs of ribosomes where the leading ribosome is stalled and a second ribosome has collided with it) and endonucleolytically cleaves mRNA at the 5' boundary of the stalled ribosome. Stalled/collided disomes form a new interface (primarily via the 30S subunits) that binds SmrB. Cleaved mRNA becomes available for tmRNA ligation, leading to ribosomal subunit dissociation and rescue of stalled ribosomes. This Shewanella oneidensis (strain ATCC 700550 / JCM 31522 / CIP 106686 / LMG 19005 / NCIMB 14063 / MR-1) protein is Ribosome rescue factor SmrB.